The primary structure comprises 123 residues: Protein lgg-1 (123 aa).

A lipid anchor (Phosphatidylethanolamine amidated glycine) is attached at Gly-116. The propeptide at 117–123 is removed in mature form; that stretch reads GEVEKKE.

This sequence belongs to the ATG8 family. In terms of assembly, interacts with sepa-1 (via the LIR motifs); the interaction is direct. Interacts with allo-1 (via the LIR motif). Interacts with sqst-1 (via the LIR motifs); the interaction is direct. Both lipidated and unlipidated forms interact with epg-7 (via the LIR motif); the interaction is direct. Interacts with epg-2 (via the LIR motifs); the interaction is direct. Interacts with atg-13; the interaction is direct. Interacts with unc-51 (via the LIR motif); the interaction is direct. Interacts with atg-7; the interaction is direct. Interacts with atg-3. The interaction with atg-7 and atg-3 may be required for the lipidation of lgg-1. Cleaved by atg-4.1 and/or atg-4.2, after Gly-116 to form a thioester bond with 'Cys-523' of atg-7 (E1-like activating enzyme) before being transferred to 'Cys-255' of atg-3 (E2 conjugating enzyme), in order to be amidated with phosphatidylethanolamine. This lipid modification anchors lgg-1 to membranes and can be reversed by atg-4.2, releasing soluble lgg-1. C-terminal cleavage is essential for autophagosome initiation and biogenesis. Lipidation is not essential for autophagy or development but the lipidated form is involved in cargo recognition and autophagosome biogenesis. Lipidation regulates lgg-2-positive autophagosome formation. As to expression, expressed in PLML touch receptor neuron and in the ventral nerve cord. Expressed in AIY interneurons.

Its subcellular location is the preautophagosomal structure. The protein localises to the cytoplasmic vesicle. The protein resides in the autophagosome. It localises to the autophagosome membrane. It is found in the lysosome lumen. Its subcellular location is the mitochondrion. The protein localises to the cytoplasm. The protein resides in the phagosome membrane. It localises to the cell membrane. It is found in the cell projection. Its subcellular location is the dendrite. The protein localises to the perikaryon. In terms of biological role, ubiquitin-like modifier involved in the formation of autophagosomal vacuoles (autophagosomes). When lipidated mediates tethering between adjacent membranes and stimulates membrane fusion during autophagy. Recruits lipidated-lgg-2 to maturing autophagosomes. Acts in the aggrephagy pathway, which is the macroautophagic degradation of ubiquitinated protein aggregates, and preferentially interacts with autophagy proteins and substrates containing LIR motifs to mediate autophagosome formation and protein aggregate degradation. In particular, binds to components of the unc-51-atg-13 complex to regulate autophagosome formation and cargo sequestration. Required for the degradation of specific sepa-1- and sqst-1-containing protein aggregates during embryogenesis. Involved in allophagy, which is an autophagic process in which paternal mitochondria and organelles are degraded during fertilization, and moreover is required for the formation of lgg-2-positive allophagic autophagosomes in embryos. Involved in the clearance of apoptotic cells by promoting the delivery of engulfed apoptotic cells to the lysosome. Plays a role in the distribution and clearance of germ cell specific P-granules from somatic cells. Also plays a role in the autophagy-mediated degradation of ribosomal RNA and ribosomal proteins in lysosomes. Involved in xenophagy, the autophagy-mediated degradation of pathogens and pathogen products, such as toxins. Required for normal survival when exposed to pathogenic bacteria S.typhimurium probably by promoting autophagic degradation of intracellular S.typhimurium. Also plays a role in membrane-pore repair. Plays a role in mitophagy. Essential for dauer development and longevity, including longevity in response to moderate, short-term heat shock, also known as a hormetic heat shock. The protein is Protein lgg-1 of Caenorhabditis elegans.